The following is a 90-amino-acid chain: Lectin-1 (90 aa).

Gln-1 bears the Pyrrolidone carboxylic acid mark. The cysteines at positions 46 and 71 are disulfide-linked.

The N-terminus is blocked. In terms of processing, contains seven disulfide bonds. Post-translationally, proteolytically cleaved. Major mature form may consist of cleaved, disulfide-bonded N-terminal and C-terminal chains.

Lectin with specificity for complex N-linked glycans and O-linked glycans. Has hemagglutinating activity towards rabbit erythrocytes. This is Lectin-1 from Hypnea musciformis (Red alga).